The chain runs to 663 residues: UvrABC system protein B (663 aa).

In terms of domain architecture, Helicase ATP-binding spans 26–414 (DGLESGLAKQ…DNVAEQVVRP (389 aa)). 39-46 (GVTGSGKT) contributes to the ATP binding site. The short motif at 92–115 (YYDYYQPEAYVPASDTFIEKDASI) is the Beta-hairpin element. Residues 430–596 (QVDDLMSEIR…GINKSVEDIL (167 aa)) form the Helicase C-terminal domain. Positions 624–659 (VKQINALEKQMYSHAQNMEFELAAKIRDEYLLLKEQ) constitute a UVR domain.

Belongs to the UvrB family. As to quaternary structure, forms a heterotetramer with UvrA during the search for lesions. Interacts with UvrC in an incision complex.

It localises to the cytoplasm. Its function is as follows. The UvrABC repair system catalyzes the recognition and processing of DNA lesions. A damage recognition complex composed of 2 UvrA and 2 UvrB subunits scans DNA for abnormalities. Upon binding of the UvrA(2)B(2) complex to a putative damaged site, the DNA wraps around one UvrB monomer. DNA wrap is dependent on ATP binding by UvrB and probably causes local melting of the DNA helix, facilitating insertion of UvrB beta-hairpin between the DNA strands. Then UvrB probes one DNA strand for the presence of a lesion. If a lesion is found the UvrA subunits dissociate and the UvrB-DNA preincision complex is formed. This complex is subsequently bound by UvrC and the second UvrB is released. If no lesion is found, the DNA wraps around the other UvrB subunit that will check the other stand for damage. The sequence is that of UvrABC system protein B from Legionella pneumophila subsp. pneumophila (strain Philadelphia 1 / ATCC 33152 / DSM 7513).